A 169-amino-acid chain; its full sequence is MPLLDSFTVDHTRMNAPAVRVAKHMSTPSGDAITVFDLRFCAPNKDILSERGIHTLEHLFAGFMREHLNGDGIEIIDISPMGCRTGFYMSLIGQPTESKVADSWLAAMVDVTNVIDQKDIPELNEYQCGTYEMHSLEQAQDIARMIIAAGVSVNQNDDLKLSDEILGNL.

3 residues coordinate Fe cation: His-54, His-58, and Cys-128.

Belongs to the LuxS family. Homodimer. The cofactor is Fe cation.

It catalyses the reaction S-(5-deoxy-D-ribos-5-yl)-L-homocysteine = (S)-4,5-dihydroxypentane-2,3-dione + L-homocysteine. In terms of biological role, involved in the synthesis of autoinducer 2 (AI-2) which is secreted by bacteria and is used to communicate both the cell density and the metabolic potential of the environment. The regulation of gene expression in response to changes in cell density is called quorum sensing. Catalyzes the transformation of S-ribosylhomocysteine (RHC) to homocysteine (HC) and 4,5-dihydroxy-2,3-pentadione (DPD). This is S-ribosylhomocysteine lyase from Shewanella frigidimarina (strain NCIMB 400).